The chain runs to 234 residues: 1-(5-phosphoribosyl)-5-[(5-phosphoribosylamino)methylideneamino] imidazole-4-carboxamide isomerase (234 aa).

Residue Asp9 is the Proton acceptor of the active site. Catalysis depends on Asp131, which acts as the Proton donor.

Belongs to the HisA/HisF family.

It is found in the cytoplasm. The enzyme catalyses 1-(5-phospho-beta-D-ribosyl)-5-[(5-phospho-beta-D-ribosylamino)methylideneamino]imidazole-4-carboxamide = 5-[(5-phospho-1-deoxy-D-ribulos-1-ylimino)methylamino]-1-(5-phospho-beta-D-ribosyl)imidazole-4-carboxamide. The protein operates within amino-acid biosynthesis; L-histidine biosynthesis; L-histidine from 5-phospho-alpha-D-ribose 1-diphosphate: step 4/9. The polypeptide is 1-(5-phosphoribosyl)-5-[(5-phosphoribosylamino)methylideneamino] imidazole-4-carboxamide isomerase (Staphylococcus aureus (strain MRSA252)).